We begin with the raw amino-acid sequence, 596 residues long: V-type ATP synthase alpha chain (596 aa).

233–240 (GPFGAGKT) is an ATP binding site.

This sequence belongs to the ATPase alpha/beta chains family.

The catalysed reaction is ATP + H2O + 4 H(+)(in) = ADP + phosphate + 5 H(+)(out). Produces ATP from ADP in the presence of a proton gradient across the membrane. The V-type alpha chain is a catalytic subunit. The protein is V-type ATP synthase alpha chain of Streptococcus sanguinis (strain SK36).